Reading from the N-terminus, the 159-residue chain is Ribosomal RNA large subunit methyltransferase H (159 aa).

S-adenosyl-L-methionine-binding positions include Leu-76, Gly-108, and 127-132 (FGLLTL).

The protein belongs to the RNA methyltransferase RlmH family. Homodimer.

It localises to the cytoplasm. The enzyme catalyses pseudouridine(1915) in 23S rRNA + S-adenosyl-L-methionine = N(3)-methylpseudouridine(1915) in 23S rRNA + S-adenosyl-L-homocysteine + H(+). Specifically methylates the pseudouridine at position 1915 (m3Psi1915) in 23S rRNA. The chain is Ribosomal RNA large subunit methyltransferase H from Streptococcus mutans serotype c (strain ATCC 700610 / UA159).